Reading from the N-terminus, the 130-residue chain is Ribosome-binding factor A (130 aa).

Belongs to the RbfA family. In terms of assembly, monomer. Binds 30S ribosomal subunits, but not 50S ribosomal subunits or 70S ribosomes.

The protein localises to the cytoplasm. In terms of biological role, one of several proteins that assist in the late maturation steps of the functional core of the 30S ribosomal subunit. Associates with free 30S ribosomal subunits (but not with 30S subunits that are part of 70S ribosomes or polysomes). Required for efficient processing of 16S rRNA. May interact with the 5'-terminal helix region of 16S rRNA. The polypeptide is Ribosome-binding factor A (Pseudomonas aeruginosa (strain LESB58)).